A 56-amino-acid polypeptide reads, in one-letter code: Cecropin-A2 (56 aa).

Arg-55 is modified (arginine amide).

The protein belongs to the cecropin family.

It is found in the secreted. In terms of biological role, cecropins have lytic and antibacterial activity against several Gram-positive and Gram-negative bacteria. In Drosophila yakuba (Fruit fly), this protein is Cecropin-A2 (CecA2).